The chain runs to 224 residues: Flagellar L-ring protein (224 aa).

Positions 1 to 15 (MARYLVLAVALLLAA) are cleaved as a signal peptide. Cys-16 carries the N-palmitoyl cysteine lipid modification. Residue Cys-16 is the site of S-diacylglycerol cysteine attachment.

It belongs to the FlgH family. In terms of assembly, the basal body constitutes a major portion of the flagellar organelle and consists of four rings (L,P,S, and M) mounted on a central rod.

Its subcellular location is the cell outer membrane. The protein resides in the bacterial flagellum basal body. In terms of biological role, assembles around the rod to form the L-ring and probably protects the motor/basal body from shearing forces during rotation. The polypeptide is Flagellar L-ring protein (Shewanella baltica (strain OS185)).